Consider the following 359-residue polypeptide: Probable mannitol dehydrogenase (359 aa).

Zn(2+)-binding residues include Cys-50, His-72, Cys-103, Cys-106, Cys-109, Cys-117, and Cys-165.

It belongs to the zinc-containing alcohol dehydrogenase family. Requires Zn(2+) as cofactor.

It carries out the reaction D-mannitol + NAD(+) = D-mannose + NADH + H(+). Functionally, oxidizes mannitol to mannose. Provides the initial step by which translocated mannitol is committed to central metabolism and, by regulating mannitol pool size, is important in regulating salt tolerance at the cellular level. This is Probable mannitol dehydrogenase (CAD1) from Medicago sativa (Alfalfa).